Reading from the N-terminus, the 208-residue chain is Putative speedy protein E7 (208 aa).

It belongs to the Speedy/Ringo family.

This chain is Putative speedy protein E7 (SPDYE7P), found in Homo sapiens (Human).